The chain runs to 361 residues: Probable dual-specificity RNA methyltransferase RlmN (361 aa).

Glu-91 serves as the catalytic Proton acceptor. The region spanning 97-329 (QHYGLSVCVT…KKKGVNCVVR (233 aa)) is the Radical SAM core domain. Cys-104 and Cys-340 are disulfide-bonded. [4Fe-4S] cluster is bound by residues Cys-111, Cys-115, and Cys-118. S-adenosyl-L-methionine-binding positions include 163 to 164 (GE), Ser-195, 218 to 220 (SLH), and Asn-296. Cys-340 functions as the S-methylcysteine intermediate in the catalytic mechanism.

The protein belongs to the radical SAM superfamily. RlmN family. [4Fe-4S] cluster is required as a cofactor.

The protein resides in the cytoplasm. The catalysed reaction is adenosine(2503) in 23S rRNA + 2 reduced [2Fe-2S]-[ferredoxin] + 2 S-adenosyl-L-methionine = 2-methyladenosine(2503) in 23S rRNA + 5'-deoxyadenosine + L-methionine + 2 oxidized [2Fe-2S]-[ferredoxin] + S-adenosyl-L-homocysteine. It carries out the reaction adenosine(37) in tRNA + 2 reduced [2Fe-2S]-[ferredoxin] + 2 S-adenosyl-L-methionine = 2-methyladenosine(37) in tRNA + 5'-deoxyadenosine + L-methionine + 2 oxidized [2Fe-2S]-[ferredoxin] + S-adenosyl-L-homocysteine. Functionally, specifically methylates position 2 of adenine 2503 in 23S rRNA and position 2 of adenine 37 in tRNAs. This is Probable dual-specificity RNA methyltransferase RlmN from Streptococcus pneumoniae serotype 4 (strain ATCC BAA-334 / TIGR4).